Reading from the N-terminus, the 71-residue chain is UPF0346 protein SAK_1533 (71 aa).

This sequence belongs to the UPF0346 family.

The chain is UPF0346 protein SAK_1533 from Streptococcus agalactiae serotype Ia (strain ATCC 27591 / A909 / CDC SS700).